Here is a 1022-residue protein sequence, read N- to C-terminus: Dihydropyrimidine dehydrogenase [NADP(+)] (1022 aa).

The disordered stretch occupies residues 26–45 (ANVHSTASKKNEKKHWKRNP). Residues 69-100 (ERGALREALRCLKCADAPCQKSCPTNLDIKSF) enclose the 4Fe-4S ferredoxin-type 1 domain. Residues C79, C82, C87, and C91 each contribute to the [4Fe-4S] cluster site. V129 serves as a coordination point for FAD. Positions 130, 136, 140, and 156 each coordinate [4Fe-4S] cluster. FAD is bound by residues 194 to 198 (GCGPA), 218 to 226 (EKQKYIGGL), R235, and L261. Residues 340–343 (AGDT), 364–365 (RK), R371, 437–439 (AFG), and 481–487 (DIAGFAN) contribute to the NADP(+) site. FAD is bound at residue 480-489 (GDIAGFANTT). Residues S550 and 574–575 (KT) contribute to the FMN site. Substrate contacts are provided by residues N609 and 668 to 670 (NLS). C671 functions as the Proton acceptor in the catalytic mechanism. K709 provides a ligand contact to FMN. Residue 736–737 (NT) participates in substrate binding. FMN contacts are provided by residues G767, 793–795 (TGG), and 816–817 (CS). 2 consecutive 4Fe-4S ferredoxin-type domains span residues 943 to 975 (VQALVDPEMCINCGKCYMTCNDSGYQAIKFDPE) and 976 to 1006 (THLPVITDSCTGCTLCLSVCPIIDCIKMVSR). The [4Fe-4S] cluster site is built by C952, C955, C958, C962, C985, C988, C991, and C995.

Belongs to the dihydropyrimidine dehydrogenase family. As to quaternary structure, homodimer. FAD serves as cofactor. It depends on FMN as a cofactor. [4Fe-4S] cluster is required as a cofactor.

The protein resides in the cytoplasm. The catalysed reaction is 5,6-dihydrouracil + NADP(+) = uracil + NADPH + H(+). The enzyme catalyses 5,6-dihydrothymine + NADP(+) = thymine + NADPH + H(+). It participates in amino-acid biosynthesis; beta-alanine biosynthesis. Involved in pyrimidine base degradation. Catalyzes the reduction of uracil and thymine. Also involved the degradation of the chemotherapeutic drug 5-fluorouracil. The sequence is that of Dihydropyrimidine dehydrogenase [NADP(+)] (dpyd) from Danio rerio (Zebrafish).